A 252-amino-acid polypeptide reads, in one-letter code: 3-dehydroquinate dehydratase (252 aa).

Residues 47–49 and Arg-83 contribute to the 3-dehydroquinate site; that span reads EWR. His-144 functions as the Proton donor/acceptor in the catalytic mechanism. Lys-171 serves as the catalytic Schiff-base intermediate with substrate. Residues Arg-213, Ser-232, and Gln-236 each contribute to the 3-dehydroquinate site.

It belongs to the type-I 3-dehydroquinase family. As to quaternary structure, homodimer.

The enzyme catalyses 3-dehydroquinate = 3-dehydroshikimate + H2O. Its pathway is metabolic intermediate biosynthesis; chorismate biosynthesis; chorismate from D-erythrose 4-phosphate and phosphoenolpyruvate: step 3/7. Involved in the third step of the chorismate pathway, which leads to the biosynthesis of aromatic amino acids. Catalyzes the cis-dehydration of 3-dehydroquinate (DHQ) and introduces the first double bond of the aromatic ring to yield 3-dehydroshikimate. This Lactiplantibacillus plantarum (strain ATCC BAA-793 / NCIMB 8826 / WCFS1) (Lactobacillus plantarum) protein is 3-dehydroquinate dehydratase.